The chain runs to 290 residues: UPF0761 membrane protein YihY (290 aa).

The next 6 helical transmembrane spans lie at 44-64 (LLSL…FPMF), 104-124 (VGAC…DSAL), 140-160 (FAVY…SLAI), 183-203 (IFPL…VPTI), 210-230 (AIVG…GFAL), and 244-264 (VLAV…IVLL).

The protein belongs to the UPF0761 family.

The protein localises to the cell inner membrane. The chain is UPF0761 membrane protein YihY from Shigella boydii serotype 4 (strain Sb227).